A 205-amino-acid chain; its full sequence is GTP cyclohydrolase-2 (205 aa).

GTP is bound at residue arginine 49–glutamate 53. Residues cysteine 54, cysteine 65, and cysteine 67 each contribute to the Zn(2+) site. GTP contacts are provided by residues glutamine 70, glutamate 92–arginine 94, and threonine 114. The active-site Proton acceptor is aspartate 126. Residue arginine 128 is the Nucleophile of the active site. GTP-binding residues include threonine 149 and lysine 154.

The protein belongs to the GTP cyclohydrolase II family. The cofactor is Zn(2+).

It catalyses the reaction GTP + 4 H2O = 2,5-diamino-6-hydroxy-4-(5-phosphoribosylamino)-pyrimidine + formate + 2 phosphate + 3 H(+). It participates in cofactor biosynthesis; riboflavin biosynthesis; 5-amino-6-(D-ribitylamino)uracil from GTP: step 1/4. Its function is as follows. Catalyzes the conversion of GTP to 2,5-diamino-6-ribosylamino-4(3H)-pyrimidinone 5'-phosphate (DARP), formate and pyrophosphate. The sequence is that of GTP cyclohydrolase-2 from Pseudomonas entomophila (strain L48).